Reading from the N-terminus, the 54-residue chain is Califin-B (54 aa).

The cysteines at positions 25 and 53 are disulfide-linked. At Leu-36 the chain carries Leucine amide.

The protein belongs to the molluscan ELH family. As to quaternary structure, this protein consists of a large 36-residue subunit, bound by a single disulfide-bond to a small 18-residue subunit.

It is found in the secreted. Functionally, injected in sexually mature animals califin B excites LB and LC cells of the abdominal ganglion and cause egg-laying. The polypeptide is Califin-B (Aplysia californica (California sea hare)).